Here is a 206-residue protein sequence, read N- to C-terminus: Large ribosomal subunit protein uL4 (206 aa).

Belongs to the universal ribosomal protein uL4 family. Part of the 50S ribosomal subunit.

In terms of biological role, one of the primary rRNA binding proteins, this protein initially binds near the 5'-end of the 23S rRNA. It is important during the early stages of 50S assembly. It makes multiple contacts with different domains of the 23S rRNA in the assembled 50S subunit and ribosome. Forms part of the polypeptide exit tunnel. The polypeptide is Large ribosomal subunit protein uL4 (Rhodopseudomonas palustris (strain HaA2)).